Consider the following 493-residue polypeptide: Probable fatty acyl-CoA reductase 4 (493 aa).

The protein belongs to the fatty acyl-CoA reductase family. Expressed in the endodermal cell layer surrounding the central vasculature in roots. Expressed in the hilum region of seeds. Expressed in stamen filaments and receptacle of siliques.

The enzyme catalyses a long-chain fatty acyl-CoA + 2 NADPH + 2 H(+) = a long-chain primary fatty alcohol + 2 NADP(+) + CoA. In terms of biological role, catalyzes the reduction of fatty acyl-CoA to fatty alcohols. Catalyzes specifically the formation of C18:0 and C20:0 fatty alcohols. Provides the fatty alcohols required for synthesis of suberin in roots, seed coat and wound-induced leaf tissue. Provides the fatty alcohols required for synthesis of alkyl hydroxycinnamates in root waxes. The polypeptide is Probable fatty acyl-CoA reductase 4 (Arabidopsis thaliana (Mouse-ear cress)).